A 500-amino-acid polypeptide reads, in one-letter code: Cobyric acid synthase (500 aa).

One can recognise a GATase cobBQ-type domain in the interval 251–449 (KLNIVIPIMP…LHGVFDHPDA (199 aa)). Catalysis depends on Cys-332, which acts as the Nucleophile. His-441 is a catalytic residue.

It belongs to the CobB/CobQ family. CobQ subfamily.

The protein operates within cofactor biosynthesis; adenosylcobalamin biosynthesis. Its function is as follows. Catalyzes amidations at positions B, D, E, and G on adenosylcobyrinic A,C-diamide. NH(2) groups are provided by glutamine, and one molecule of ATP is hydrogenolyzed for each amidation. This is Cobyric acid synthase from Marinomonas sp. (strain MWYL1).